The sequence spans 295 residues: Ribosomal protein L11 methyltransferase (295 aa).

Residues threonine 146, glycine 167, aspartate 189, and asparagine 231 each coordinate S-adenosyl-L-methionine.

Belongs to the methyltransferase superfamily. PrmA family.

The protein localises to the cytoplasm. The catalysed reaction is L-lysyl-[protein] + 3 S-adenosyl-L-methionine = N(6),N(6),N(6)-trimethyl-L-lysyl-[protein] + 3 S-adenosyl-L-homocysteine + 3 H(+). In terms of biological role, methylates ribosomal protein L11. This Vibrio campbellii (strain ATCC BAA-1116) protein is Ribosomal protein L11 methyltransferase.